The primary structure comprises 63 residues: 2-hydroxymuconate tautomerase (63 aa).

Proline 2 functions as the Proton acceptor; via imino nitrogen in the catalytic mechanism.

Belongs to the 4-oxalocrotonate tautomerase family. Homohexamer.

It catalyses the reaction (2Z,4E)-2-hydroxyhexa-2,4-dienedioate = (3E)-2-oxohex-3-enedioate. It participates in aromatic compound metabolism; salicylate degradation. Functionally, catalyzes the ketonization of 2-hydroxymuconate stereoselectively to yield 2-oxo-3-hexenedioate. This Pseudomonas fluorescens protein is 2-hydroxymuconate tautomerase (nahJ).